Consider the following 1294-residue polypeptide: Leucine-rich repeat receptor protein kinase MSP1 (1294 aa).

The signal sequence occupies residues 1 to 22 (MVSNSFWLFILLVSFIPISAWA). LRR repeat units follow at residues 88–112 (FQSL…LGNL), 113–136 (QNLQ…LYNL), 138–160 (MLKE…IAQL), 161–184 (QHLT…LGSL), and 186–207 (NLEL…TFGN). N-linked (GlcNAc...) asparagine glycosylation is found at N198, N207, and N220. LRR repeat units follow at residues 232 to 256 (LTNL…IGQL), 258 to 280 (NLEL…IGSL), 282 to 304 (QLKL…ISGL), 305 to 328 (SSLT…MGEL), 330 to 352 (NLTQ…LGNC), 353 to 376 (KKLT…FADL), 378 to 400 (AIVS…IQKW), 401 to 422 (KNAR…VLPL), 423 to 446 (QHLL…ICQA), 447 to 469 (NSLH…AFKG), 471 to 493 (TNLT…YLAE), 494 to 517 (LPLV…LWES), 519 to 541 (TLLE…IGKL), 542 to 565 (SVLQ…VGDL), 566 to 589 (RNLT…LFNC), 591 to 613 (KLAT…ISHL), 614 to 637 (TLLD…ICVG), 649 to 673 (LQHH…IKNC), 675 to 697 (MVMV…LGEL), 698 to 721 (TNLT…SGPL), 722 to 745 (VQLQ…IGQI), 746 to 770 (LPKI…LLCN), and 772 to 794 (YLNH…CPDG). N330 and N359 each carry an N-linked (GlcNAc...) asparagine glycan. N-linked (GlcNAc...) asparagine glycosylation is found at N458 and N472. 3 N-linked (GlcNAc...) asparagine glycosylation sites follow: N567, N570, and N601. N-linked (GlcNAc...) asparagine glycosylation is found at N687, N699, and N704. N805, N821, and N832 each carry an N-linked (GlcNAc...) asparagine glycan. LRR repeat units lie at residues 822-846 (FTQL…LSDL) and 848-870 (SLNY…ICNI). Residues 917–937 (ITICAFTFVIIIVLVLLAVYL) form a helical membrane-spanning segment. In terms of domain architecture, Protein kinase spans 1002-1282 (FSKVHIIGDG…KGLKMTHGME (281 aa)). ATP contacts are provided by residues 1008 to 1016 (IGDGGFGTV) and K1030. D1129 functions as the Proton acceptor in the catalytic mechanism.

The protein belongs to the protein kinase superfamily. Ser/Thr protein kinase family. As to quaternary structure, interacts with TDL1A. Expressed in anthers and ovules during meiosis.

Its subcellular location is the cell membrane. It carries out the reaction L-seryl-[protein] + ATP = O-phospho-L-seryl-[protein] + ADP + H(+). The enzyme catalyses L-threonyl-[protein] + ATP = O-phospho-L-threonyl-[protein] + ADP + H(+). In terms of biological role, receptor-like kinase that plays important roles in restricting the number of cells entering into male and female sporogenesis. Involved in cell specification during anther development and initiation of anther wall formation. The chain is Leucine-rich repeat receptor protein kinase MSP1 from Oryza sativa subsp. japonica (Rice).